Consider the following 154-residue polypeptide: Protein X (154 aa).

Positions 68-117 (PCALRFTSARRMETTVNANQVLPKVLHKRTLGLSALSTTDLEAYFKDCVF) are mitochondrial targeting sequence.

Belongs to the orthohepadnavirus protein X family. May form homodimer. May interact with host CEBPA, CFLAR, CREB1, DDB1, E4F1, HBXIP, HSPD1/HSP60, NFKBIA, POLR2E and SMAD4. Interacts with host SMC5-SMC6 complex and induces its degradation. Interacts with host TRPC4AP; leading to prevent ubiquitination of TRPC4AP. Interacts with host PLSCR1; this interaction promotes ubiquitination and degradation of HBx and impairs HBx-mediated cell proliferation. Post-translationally, a fraction may be phosphorylated in insect cells and HepG2 cells, a human hepatoblastoma cell line. Phosphorylated in vitro by host protein kinase C or mitogen-activated protein kinase. N-acetylated in insect cells.

It is found in the host cytoplasm. The protein resides in the host nucleus. Its subcellular location is the host mitochondrion. Multifunctional protein that plays a role in silencing host antiviral defenses and promoting viral transcription. Does not seem to be essential for HBV infection. May be directly involved in development of cirrhosis and liver cancer (hepatocellular carcinoma). Most of cytosolic activities involve modulation of cytosolic calcium. The effect on apoptosis is controversial depending on the cell types in which the studies have been conducted. May induce apoptosis by localizing in mitochondria and causing loss of mitochondrial membrane potential. May also modulate apoptosis by binding host CFLAR, a key regulator of the death-inducing signaling complex (DISC). Promotes viral transcription by using the host E3 ubiquitin ligase DDB1 to target the SMC5-SMC6 complex to proteasomal degradation. This host complex would otherwise bind to viral episomal DNA, and prevents its transcription. Moderately stimulates transcription of many different viral and cellular transcription elements. Promoters and enhancers stimulated by HBx contain DNA binding sites for NF-kappa-B, AP-1, AP-2, c-EBP, ATF/CREB, or the calcium-activated factor NF-AT. The protein is Protein X of Homo sapiens (Human).